Reading from the N-terminus, the 864-residue chain is Leucine--tRNA ligase (864 aa).

The 'HIGH' region signature appears at 47–57 (PYPSGNLHMGH). A disordered region spans residues 298–317 (SEQDRVADDRPKRGVATGGT). The segment covering 299–309 (EQDRVADDRPK) has biased composition (basic and acidic residues). The 'KMSKS' region motif lies at 622–626 (KMSKS). K625 serves as a coordination point for ATP.

Belongs to the class-I aminoacyl-tRNA synthetase family.

It localises to the cytoplasm. It carries out the reaction tRNA(Leu) + L-leucine + ATP = L-leucyl-tRNA(Leu) + AMP + diphosphate. The polypeptide is Leucine--tRNA ligase (Synechococcus sp. (strain RCC307)).